Here is a 318-residue protein sequence, read N- to C-terminus: Mitochondrial thiamine pyrophosphate carrier (318 aa).

Solcar repeat units lie at residues 13 to 106, 116 to 202, and 214 to 309; these read NSKL…LTEL, HQFS…LKRA, and TGNL…FCNL. The next 5 helical transmembrane spans lie at 19-39, 87-107, 122-142, 173-193, and 220-240; these read AVAG…LDVI, ILSI…TELL, FVCG…VDVL, VFYK…GLQF, and LLCG…LDLI. Residues 241-246 carry the Substrate recognition motif; it reads KKRLQV. Residues 293–313 form a helical membrane-spanning segment; it reads ALSTGFMFFWYELFCNLFHCI.

This sequence belongs to the mitochondrial carrier (TC 2.A.29) family.

Its subcellular location is the mitochondrion membrane. It carries out the reaction thiamine phosphate(out) + thiamine diphosphate(in) = thiamine phosphate(in) + thiamine diphosphate(out). Functionally, mitochondrial transporter mediating uptake of thiamine diphosphate into mitochondria. It is not clear if the antiporter activity is affected by the membrane potential or by the proton electrochemical gradient. The chain is Mitochondrial thiamine pyrophosphate carrier (Slc25a19) from Mus musculus (Mouse).